Here is a 394-residue protein sequence, read N- to C-terminus: NAD(P)H-quinone oxidoreductase subunit H (394 aa).

This sequence belongs to the complex I 49 kDa subunit family. In terms of assembly, NDH-1 can be composed of about 15 different subunits; different subcomplexes with different compositions have been identified which probably have different functions.

It localises to the cellular thylakoid membrane. It carries out the reaction a plastoquinone + NADH + (n+1) H(+)(in) = a plastoquinol + NAD(+) + n H(+)(out). The enzyme catalyses a plastoquinone + NADPH + (n+1) H(+)(in) = a plastoquinol + NADP(+) + n H(+)(out). Its function is as follows. NDH-1 shuttles electrons from an unknown electron donor, via FMN and iron-sulfur (Fe-S) centers, to quinones in the respiratory and/or the photosynthetic chain. The immediate electron acceptor for the enzyme in this species is believed to be plastoquinone. Couples the redox reaction to proton translocation, and thus conserves the redox energy in a proton gradient. Cyanobacterial NDH-1 also plays a role in inorganic carbon-concentration. The protein is NAD(P)H-quinone oxidoreductase subunit H of Synechococcus sp. (strain ATCC 27144 / PCC 6301 / SAUG 1402/1) (Anacystis nidulans).